Reading from the N-terminus, the 141-residue chain is MPKKITALIKLALPAGKATPAPPVGPALGQHGVNIAAFCKEYNARTTEKMGLIIPVEISVYEDRSYTFILKTPPASVLLANAAKVKKGSATPNRVNVGSVTKAQLEEIANIKLPDLNTTEISSAIRIVEGTARNMGITVSD.

Belongs to the universal ribosomal protein uL11 family. As to quaternary structure, part of the ribosomal stalk of the 50S ribosomal subunit. Interacts with L10 and the large rRNA to form the base of the stalk. L10 forms an elongated spine to which L12 dimers bind in a sequential fashion forming a multimeric L10(L12)X complex.

Its subcellular location is the plastid. It localises to the chloroplast. Its function is as follows. Forms part of the ribosomal stalk which helps the ribosome interact with GTP-bound translation factors. The sequence is that of Large ribosomal subunit protein uL11c from Thalassiosira pseudonana (Marine diatom).